A 383-amino-acid polypeptide reads, in one-letter code: 8-amino-7-oxononanoate synthase (383 aa).

Residue arginine 22 participates in substrate binding. 109–110 (GF) serves as a coordination point for pyridoxal 5'-phosphate. Histidine 134 lines the substrate pocket. Pyridoxal 5'-phosphate is bound by residues serine 178, histidine 206, and threonine 232. Lysine 235 carries the post-translational modification N6-(pyridoxal phosphate)lysine. Substrate is bound at residue threonine 348.

Belongs to the class-II pyridoxal-phosphate-dependent aminotransferase family. BioF subfamily. Homodimer. The cofactor is pyridoxal 5'-phosphate.

It catalyses the reaction 6-carboxyhexanoyl-[ACP] + L-alanine + H(+) = (8S)-8-amino-7-oxononanoate + holo-[ACP] + CO2. The protein operates within cofactor biosynthesis; biotin biosynthesis. In terms of biological role, catalyzes the decarboxylative condensation of pimeloyl-[acyl-carrier protein] and L-alanine to produce 8-amino-7-oxononanoate (AON), [acyl-carrier protein], and carbon dioxide. The chain is 8-amino-7-oxononanoate synthase from Vibrio campbellii (strain ATCC BAA-1116).